Reading from the N-terminus, the 55-residue chain is Mitochondrial import receptor subunit TOM7 homolog (55 aa).

The Cytoplasmic segment spans residues 1–20 (MVKLSKEAKQRLQQLFKGSQ). A helical transmembrane segment spans residues 21 to 36 (FAIRWGFIPLVIYLGF). Residues 37–55 (KRGADPGMPEPTVLSLLWG) are Mitochondrial intermembrane-facing.

This sequence belongs to the Tom7 family. Forms part of the preprotein translocase complex of the outer mitochondrial membrane (TOM complex) which consists of at least 7 different proteins (TOMM5, TOMM6, TOMM7, TOMM20, TOMM22, TOMM40 and TOMM70).

It is found in the mitochondrion outer membrane. In terms of biological role, required for assembly and stability of the TOM complex. Positive regulator of PRKN translocation to damaged mitochondria. Acts probably by stabilizing PINK1 on the outer membrane of depolarized mitochondria. The chain is Mitochondrial import receptor subunit TOM7 homolog (TOMM7) from Homo sapiens (Human).